The sequence spans 370 residues: Anhydro-N-acetylmuramic acid kinase (370 aa).

13 to 20 (GTSMDGID) is a binding site for ATP.

The protein belongs to the anhydro-N-acetylmuramic acid kinase family.

The catalysed reaction is 1,6-anhydro-N-acetyl-beta-muramate + ATP + H2O = N-acetyl-D-muramate 6-phosphate + ADP + H(+). It participates in amino-sugar metabolism; 1,6-anhydro-N-acetylmuramate degradation. The protein operates within cell wall biogenesis; peptidoglycan recycling. In terms of biological role, catalyzes the specific phosphorylation of 1,6-anhydro-N-acetylmuramic acid (anhMurNAc) with the simultaneous cleavage of the 1,6-anhydro ring, generating MurNAc-6-P. Is required for the utilization of anhMurNAc either imported from the medium or derived from its own cell wall murein, and thus plays a role in cell wall recycling. The protein is Anhydro-N-acetylmuramic acid kinase of Rhizobium etli (strain ATCC 51251 / DSM 11541 / JCM 21823 / NBRC 15573 / CFN 42).